The sequence spans 421 residues: D-amino acid dehydrogenase (421 aa).

3 to 17 (VLILGSGVIGVTSAY) serves as a coordination point for FAD.

The protein belongs to the DadA oxidoreductase family. The cofactor is FAD.

The enzyme catalyses a D-alpha-amino acid + A + H2O = a 2-oxocarboxylate + AH2 + NH4(+). In terms of biological role, oxidative deamination of D-amino acids. The sequence is that of D-amino acid dehydrogenase from Bradyrhizobium diazoefficiens (strain JCM 10833 / BCRC 13528 / IAM 13628 / NBRC 14792 / USDA 110).